Reading from the N-terminus, the 305-residue chain is GMP synthase [glutamine-hydrolyzing] subunit B (305 aa).

One can recognise a GMPS ATP-PPase domain in the interval valine 2–arginine 184. Serine 29 to serine 35 is an ATP binding site.

In terms of assembly, heterodimer composed of a glutamine amidotransferase subunit (A) and a GMP-binding subunit (B).

The enzyme catalyses XMP + L-glutamine + ATP + H2O = GMP + L-glutamate + AMP + diphosphate + 2 H(+). The protein operates within purine metabolism; GMP biosynthesis; GMP from XMP (L-Gln route): step 1/1. Its function is as follows. Catalyzes the synthesis of GMP from XMP. This is GMP synthase [glutamine-hydrolyzing] subunit B from Methanocella arvoryzae (strain DSM 22066 / NBRC 105507 / MRE50).